Reading from the N-terminus, the 188-residue chain is Probable chorismate pyruvate-lyase (188 aa).

The substrate site is built by arginine 90, leucine 128, and glutamate 175.

Belongs to the UbiC family.

It localises to the cytoplasm. The catalysed reaction is chorismate = 4-hydroxybenzoate + pyruvate. The protein operates within cofactor biosynthesis; ubiquinone biosynthesis. Functionally, removes the pyruvyl group from chorismate, with concomitant aromatization of the ring, to provide 4-hydroxybenzoate (4HB) for the ubiquinone pathway. The protein is Probable chorismate pyruvate-lyase of Marinobacter nauticus (strain ATCC 700491 / DSM 11845 / VT8) (Marinobacter aquaeolei).